We begin with the raw amino-acid sequence, 336 residues long: UDP-3-O-acylglucosamine N-acyltransferase (336 aa).

His-237 functions as the Proton acceptor in the catalytic mechanism.

It belongs to the transferase hexapeptide repeat family. LpxD subfamily. As to quaternary structure, homotrimer.

It carries out the reaction a UDP-3-O-[(3R)-3-hydroxyacyl]-alpha-D-glucosamine + a (3R)-hydroxyacyl-[ACP] = a UDP-2-N,3-O-bis[(3R)-3-hydroxyacyl]-alpha-D-glucosamine + holo-[ACP] + H(+). It participates in bacterial outer membrane biogenesis; LPS lipid A biosynthesis. Its function is as follows. Catalyzes the N-acylation of UDP-3-O-acylglucosamine using 3-hydroxyacyl-ACP as the acyl donor. Is involved in the biosynthesis of lipid A, a phosphorylated glycolipid that anchors the lipopolysaccharide to the outer membrane of the cell. The polypeptide is UDP-3-O-acylglucosamine N-acyltransferase (Alcanivorax borkumensis (strain ATCC 700651 / DSM 11573 / NCIMB 13689 / SK2)).